The following is a 440-amino-acid chain: Chaperone SurA (440 aa).

An N-terminal signal peptide occupies residues 1–25; that stretch reads MGTKLSSRSPFSLPFLTLLAGMAIA. PpiC domains are found at residues 182 to 283 and 294 to 392; these read SDEY…KLVE and IDQT…QVIE.

The protein localises to the periplasm. The catalysed reaction is [protein]-peptidylproline (omega=180) = [protein]-peptidylproline (omega=0). Chaperone involved in the correct folding and assembly of outer membrane proteins. Recognizes specific patterns of aromatic residues and the orientation of their side chains, which are found more frequently in integral outer membrane proteins. May act in both early periplasmic and late outer membrane-associated steps of protein maturation. The polypeptide is Chaperone SurA (Nitrosospira multiformis (strain ATCC 25196 / NCIMB 11849 / C 71)).